Reading from the N-terminus, the 475-residue chain is Ribulose bisphosphate carboxylase large chain (475 aa).

Residues 1 to 2 (MS) constitute a propeptide that is removed on maturation. N-acetylproline is present on P3. K14 is subject to N6,N6,N6-trimethyllysine. 2 residues coordinate substrate: N123 and T173. K175 (proton acceptor) is an active-site residue. Position 177 (K177) interacts with substrate. K201, D203, and E204 together coordinate Mg(2+). K201 carries the post-translational modification N6-carboxylysine. H294 (proton acceptor) is an active-site residue. Residues R295, H327, and S379 each coordinate substrate.

It belongs to the RuBisCO large chain family. Type I subfamily. Heterohexadecamer of 8 large chains and 8 small chains; disulfide-linked. The disulfide link is formed within the large subunit homodimers. Requires Mg(2+) as cofactor. The disulfide bond which can form in the large chain dimeric partners within the hexadecamer appears to be associated with oxidative stress and protein turnover.

Its subcellular location is the plastid. It localises to the chloroplast. It carries out the reaction 2 (2R)-3-phosphoglycerate + 2 H(+) = D-ribulose 1,5-bisphosphate + CO2 + H2O. The enzyme catalyses D-ribulose 1,5-bisphosphate + O2 = 2-phosphoglycolate + (2R)-3-phosphoglycerate + 2 H(+). In terms of biological role, ruBisCO catalyzes two reactions: the carboxylation of D-ribulose 1,5-bisphosphate, the primary event in carbon dioxide fixation, as well as the oxidative fragmentation of the pentose substrate in the photorespiration process. Both reactions occur simultaneously and in competition at the same active site. In Larix occidentalis (Western larch), this protein is Ribulose bisphosphate carboxylase large chain.